Reading from the N-terminus, the 1159-residue chain is MSLNVVMGNGQHDLRSEMLTMIQQQFCQNELLTVFYIVPNHVKFDSEVNVLQRFSIMNGNDDSELYAQSRLQVYSLTRLAWALMKNTPDRQPDIVEPTGLFMIVSNILREQSDNLPVFSRMQTKSGFVSALVAQLVELRASNVTPENLLEVLEKSADNIFLRQTLNAKLHDLAIVADDFNARMGENQITGQETLIAFAKQLADLKLSNVAFYFDGFNGFTSAEMMVVNQLITTYPVTMGILGDPEKMGQQREGDVFFKPMTTVEQLSITARTAQQEVAITAATKMRPLSRTAQQVLGAWACLGEYRNFTGSRDEVHLNVFAAENPITEIKEVARRIRRSLVDDPTLHLRDIIILSRDLTPYQAHIEAVMSQFELPYFLDMDVNMMNHPLVELILNLLAPNKFQYQTMLAILKTGLLRPTFENKIVSHDEFFDIVSHMDNYLYAYRPYESRWRDFSRPFKLFQVTRDDDDTEISEDEKVNNRLEYLRHFIVEAFDELDDGFAMAKNLRQSVTHLVLWLQKYHVTDALLEQRDDFIAQGNLSRSQQSEEVWQMLTKTLDEMVEIDGERSVSLTDIVTTLQAGLSGAKFSGIPNNLDQLMISEAGIVQNTQYKQLYFIGGTRQNLPAQVKNAALINDAERSIVQPALQSGTNPRYLQNTAQQQMAEENLLFYGSLMSSIGSITLSYPILEPSGQLAEMSPFFKRLVDTFNSEVEVIGSIPSSAASLLKQYVGTARATLSDLVKILPVYGQTAAFKAVQNVISNTMQDRLERVLSAPNYQNNTTKLKPEFISALFGERLNVSISQLESYYSNPFAYFLQYGLKLQERATNELNVAQTGTLYHAVFENVLHELIVKNKSLRDITGDELRALVRQHMQSQLALPAFEILNDSGKMRATTNYLTRVCETLVLNLQAAARENTSKPEAVEQLFGFSKESLPPLSFARMQVRGKLDRFDKQDVNGEFGTIIDYKSNGKTFNWGQAYDGLQMQLLTYWDAAQQSAEKLGVAAIGGAFFAKISPEKTKITDKTDLNALFTGKLIPETFKYRGLFISEPAYVSALTTLEPQEKSAHYPVVLLKNGALGKIGVDAVDPDEFALLLQRNRENIITAGDLILSGYFPIMPVEGGLTYSPYLDIIRFDRALGDAYKVQSPADKNTIIKLLKGGQD.

It belongs to the helicase family. AddB/RexB type 2 subfamily. In terms of assembly, heterodimer of AddA and RexB. Requires Mg(2+) as cofactor.

The heterodimer acts as both an ATP-dependent DNA helicase and an ATP-dependent, dual-direction single-stranded exonuclease. Recognizes the chi site generating a DNA molecule suitable for the initiation of homologous recombination. This subunit has 5' -&gt; 3' nuclease activity but not helicase activity. This is ATP-dependent helicase/deoxyribonuclease subunit B from Leuconostoc mesenteroides subsp. mesenteroides (strain ATCC 8293 / DSM 20343 / BCRC 11652 / CCM 1803 / JCM 6124 / NCDO 523 / NBRC 100496 / NCIMB 8023 / NCTC 12954 / NRRL B-1118 / 37Y).